The chain runs to 209 residues: MKTSEWIDISQPLNNDIATWPGDTPFSYEVSWSKEESGSVNVGKLTMSIHTGTHIDAPFHFDNEGKKVIDLDVQVYVGPARIIDVSNLESIGKKELEKFHLEGVERLLLRTSSHGKANEFPDIIPHLRADIAPFLSEKGIRLIGVDVPSVDPLDDKELAAHHQLFKHGIHILENVVLDHVADGDYELIALPLALSDADGSPVRAVIRPI.

Tryptophan 20 is a binding site for substrate. 3 residues coordinate Zn(2+): histidine 50, histidine 54, and aspartate 56. Catalysis depends on histidine 60, which acts as the Proton donor/acceptor. Zn(2+) contacts are provided by histidine 161 and glutamate 173.

The protein belongs to the Cyclase 1 superfamily. KynB family. Homodimer. Zn(2+) serves as cofactor.

The catalysed reaction is N-formyl-L-kynurenine + H2O = L-kynurenine + formate + H(+). It functions in the pathway amino-acid degradation; L-tryptophan degradation via kynurenine pathway; L-kynurenine from L-tryptophan: step 2/2. In terms of biological role, catalyzes the hydrolysis of N-formyl-L-kynurenine to L-kynurenine, the second step in the kynurenine pathway of tryptophan degradation. This is Kynurenine formamidase from Bacillus thuringiensis (strain Al Hakam).